The chain runs to 221 residues: Transcriptional regulatory protein QseB (221 aa).

Positions 2-116 (RILLIEDDNL…EVAARLQALI (115 aa)) constitute a Response regulatory domain. A 4-aspartylphosphate modification is found at Asp51. Residues 124–218 (HSVIEQAGVK…VHGVGYALGQ (95 aa)) constitute a DNA-binding region (ompR/PhoB-type).

Phosphorylated by QseC.

It localises to the cytoplasm. Functionally, member of a two-component regulatory system QseB/QseC. This Haemophilus influenzae (strain ATCC 51907 / DSM 11121 / KW20 / Rd) protein is Transcriptional regulatory protein QseB (qseB).